The sequence spans 97 residues: Large ribosomal subunit protein eL21 (97 aa).

It belongs to the eukaryotic ribosomal protein eL21 family.

The sequence is that of Large ribosomal subunit protein eL21 from Methanococcus vannielii (strain ATCC 35089 / DSM 1224 / JCM 13029 / OCM 148 / SB).